The primary structure comprises 474 residues: Tumor necrosis factor receptor superfamily member 1B (474 aa).

An N-terminal signal peptide occupies residues 1-22 (MAPAALWVALVVELQLWATGHT). The Extracellular segment spans residues 23–258 (VPAKVVLTPY…PIIEPSITGG (236 aa)). A glycan (O-linked (GalNAc...) threonine) is linked at T30. 4 TNFR-Cys repeats span residues 39 to 77 (QCQISQEYYDKKAQMCCAKCPPGQYAKHFCNKTSDTVCA), 78 to 119 (DCAA…NRVC), 120 to 164 (ACNA…VICS), and 165 to 203 (ACAPGTFSDTTSSTDVCRPHRICSILAIPGNASTDAVCA). 10 disulfides stabilise this stretch: C40–C54, C55–C68, C58–C76, C79–C94, C97–C111, C101–C119, C121–C127, C136–C145, C139–C163, and C166–C181. N69 is a glycosylation site (N-linked (GlcNAc...) asparagine). N110 carries an N-linked (GlcNAc...) asparagine glycan. The N-linked (GlcNAc...) asparagine glycan is linked to N195. O-linked (GalNAc...) threonine glycosylation is found at T208 and T224. A compositionally biased stretch (polar residues) spans 220 to 239 (QPEPTRSQPMDQEPGPSQTP). The interval 220 to 241 (QPEPTRSQPMDQEPGPSQTPHI) is disordered. A helical membrane pass occupies residues 259-288 (ISLPIGLIVGLTTLGLLMLGLANCFILVQR). Residues 289–474 (KKKPSCLQRE…WYDQIAVKVP (186 aa)) lie on the Cytoplasmic side of the membrane. Disordered regions lie at residues 321-378 (LTTA…GSHG) and 397-464 (SQCS…NQPG). Composition is skewed to low complexity over residues 324 to 338 (APSSSSSSLESSASA) and 366 to 378 (GSRSSDSSHGSHG). S331 carries the phosphoserine modification. The segment covering 429–442 (ECPSQSQWETTETL) has biased composition (polar residues).

Binds to TRAF2. Interacts with BMX. Interacts (activated form) with XPNPEP3.

It localises to the membrane. Receptor with high affinity for TNFSF2/TNF-alpha and approximately 5-fold lower affinity for homotrimeric TNFSF1/lymphotoxin-alpha. The TRAF1/TRAF2 complex recruits the apoptotic suppressors BIRC2 and BIRC3 to TNFRSF1B/TNFR2. The sequence is that of Tumor necrosis factor receptor superfamily member 1B (Tnfrsf1b) from Rattus norvegicus (Rat).